Here is a 379-residue protein sequence, read N- to C-terminus: Cytochrome b (379 aa).

The next 4 membrane-spanning stretches (helical) occupy residues 34–54 (FGSLLGICLITQILTGLLLAT), 78–99 (WLIRNLHANGASFFFICIYLHI), 114–134 (WNIGIILLLTLMATAFVGYVL), and 179–199 (FFALHFLLPFLIVSLSIIHLT). Residues histidine 84 and histidine 98 each coordinate heme b. Residues histidine 183 and histidine 197 each coordinate heme b. Histidine 202 serves as a coordination point for a ubiquinone. 4 helical membrane passes run 227-247 (TKDMLGFTLMFFPLLTLAFFF), 289-309 (LGGVLALTASVLILFLSPLLH), 321-341 (MSQLLFWLLIANLLILTWIGS), and 348-368 (FIIIGQVASFTYFFTLLFLFP).

Belongs to the cytochrome b family. As to quaternary structure, the cytochrome bc1 complex contains 11 subunits: 3 respiratory subunits (MT-CYB, CYC1 and UQCRFS1), 2 core proteins (UQCRC1 and UQCRC2) and 6 low-molecular weight proteins (UQCRH/QCR6, UQCRB/QCR7, UQCRQ/QCR8, UQCR10/QCR9, UQCR11/QCR10 and a cleavage product of UQCRFS1). This cytochrome bc1 complex then forms a dimer. It depends on heme b as a cofactor.

The protein resides in the mitochondrion inner membrane. Its function is as follows. Component of the ubiquinol-cytochrome c reductase complex (complex III or cytochrome b-c1 complex) that is part of the mitochondrial respiratory chain. The b-c1 complex mediates electron transfer from ubiquinol to cytochrome c. Contributes to the generation of a proton gradient across the mitochondrial membrane that is then used for ATP synthesis. This Tinamus major (Great tinamou) protein is Cytochrome b (MT-CYB).